The sequence spans 352 residues: Mannonate dehydratase (352 aa).

This sequence belongs to the mannonate dehydratase family. It depends on Fe(2+) as a cofactor. Mn(2+) is required as a cofactor.

The enzyme catalyses D-mannonate = 2-dehydro-3-deoxy-D-gluconate + H2O. The protein operates within carbohydrate metabolism; pentose and glucuronate interconversion. In terms of biological role, catalyzes the dehydration of D-mannonate. This chain is Mannonate dehydratase, found in Paraburkholderia phytofirmans (strain DSM 17436 / LMG 22146 / PsJN) (Burkholderia phytofirmans).